Reading from the N-terminus, the 524-residue chain is MGKPARKGCEWKRFLKNNWVLLSTVAAVVLGITTGVLVREHSNLSTLEKFYFAFPGEILMRMLKLIILPLIISSMITGVAALDSNVSGKIGLRAVVYYFCTTLIAVILGIVLVVSIKPGVTQKVGEIARTGSTPEVSTVDAMLDLIRNMFPENLVQACFQQYKTKREEVKPPSDPEMNMTEESFTAVMTTAISKNKTKEYKIVGMYSDGINVLGLIVFCLVFGLVIGKMGEKGQILVDFFNALSDATMKIVQIIMCYMPLGILFLIAGKIIEVEDWEIFRKLGLYMATVLTGLAIHSIVILPLIYFIVVRKNPFRFAMGMAQALLTALMISSSSATLPVTFRCAEENNQVDKRITRFVLPVGATINMDGTALYEAVAAVFIAQLNDLDLGIGQIITISITATSASIGAAGVPQAGLVTMVIVLSAVGLPAEDVTLIIAVDWLLDRFRTMVNVLGDAFGTGIVEKLSKKELEQMDVSSEVNIVNPFALESTILDNEDSDTKKSYVNGGFAVDKSDTISFTQTSQF.

Residues Met1–Asn18 lie on the Cytoplasmic side of the membrane. Residues Trp19–Val38 traverse the membrane as a helical segment. The Extracellular portion of the chain corresponds to Arg39 to Arg61. Residue Asn43 is glycosylated (N-linked (GlcNAc...) asparagine). Residues Met62–Leu82 traverse the membrane as a helical segment. Residues Asp83–Arg93 are Cytoplasmic-facing. The helical transmembrane segment at Ala94–Val114 threads the bilayer. Na(+)-binding residues include Tyr98, Thr101, and Thr102. Residues Ser115–Met205 lie on the Extracellular side of the membrane. Asn178 and Asn195 each carry an N-linked (GlcNAc...) asparagine glycan. The chain crosses the membrane as a helical span at residues Tyr206–Met229. Over Gly230 to Asp238 the chain is Cytoplasmic. A helical membrane pass occupies residues Phe239–Ile266. At Ala267–Met286 the chain is on the extracellular side. Residues Ala287–Val308 traverse the membrane as a helical segment. Residues Val309–Pro313 are Cytoplasmic-facing. The segment at residues Phe314–Ala344 is an intramembrane region (discontinuously helical). The L-aspartate site is built by Ser331 and Ser333. Topologically, residues Glu345 to Arg353 are cytoplasmic. The helical transmembrane segment at Ile354–Phe380 threads the bilayer. Residues Gly362, Thr364, Asn366, and Asp368 each coordinate Na(+). An L-aspartate-binding site is contributed by Thr370. The Extracellular segment spans residues Ile381 to Gln393. Residues Ile394–Gly427 constitute an intramembrane region (discontinuously helical). Na(+) is bound by residues Ser405, Ile406, and Ala408. Val411 is a binding site for L-aspartate. Over Leu428–Asp440 the chain is Extracellular. Residues Trp441 to Val462 traverse the membrane as a helical segment. L-aspartate is bound by residues Arg447, Thr448, and Asn451. Residues Asn451 and Asp455 each coordinate Na(+). Topologically, residues Glu463–Phe524 are cytoplasmic. A phosphoserine mark is found at Ser517 and Ser522.

The protein belongs to the dicarboxylate/amino acid:cation symporter (DAACS) (TC 2.A.23) family. SLC1A1 subfamily. In terms of assembly, homotrimer. Interacts with ARL6IP5. Interacts with RTN2 (via N-terminus); the interaction promotes cell surface expression of SLC1A1. Interacts with SORCS2; this interaction is important for normal expression at the cell membrane. Post-translationally, glycosylated. Expressed in all tissues tested including liver, muscle, testis, ovary, retinoblastoma cell line, neurons and brain (in which there was dense expression in substantia nigra, red nucleus, hippocampus and in cerebral cortical layers).

The protein resides in the cell membrane. The protein localises to the apical cell membrane. Its subcellular location is the synapse. It is found in the synaptosome. It localises to the early endosome membrane. The protein resides in the late endosome membrane. The protein localises to the recycling endosome membrane. It catalyses the reaction K(+)(in) + L-glutamate(out) + 3 Na(+)(out) + H(+)(out) = K(+)(out) + L-glutamate(in) + 3 Na(+)(in) + H(+)(in). The catalysed reaction is K(+)(in) + L-aspartate(out) + 3 Na(+)(out) + H(+)(out) = K(+)(out) + L-aspartate(in) + 3 Na(+)(in) + H(+)(in). The enzyme catalyses D-aspartate(out) + K(+)(in) + 3 Na(+)(out) + H(+)(out) = D-aspartate(in) + K(+)(out) + 3 Na(+)(in) + H(+)(in). It carries out the reaction K(+)(in) + L-cysteine(out) + 3 Na(+)(out) + H(+)(out) = K(+)(out) + L-cysteine(in) + 3 Na(+)(in) + H(+)(in). Its function is as follows. Sodium-dependent, high-affinity amino acid transporter that mediates the uptake of L-glutamate and also L-aspartate and D-aspartate. Can also transport L-cysteine. Functions as a symporter that transports one amino acid molecule together with two or three Na(+) ions and one proton, in parallel with the counter-transport of one K(+) ion. Mediates Cl(-) flux that is not coupled to amino acid transport; this avoids the accumulation of negative charges due to aspartate and Na(+) symport. Plays an important role in L-glutamate and L-aspartate reabsorption in renal tubuli. Plays a redundant role in the rapid removal of released glutamate from the synaptic cleft, which is essential for terminating the postsynaptic action of glutamate. Contributes to glutathione biosynthesis and protection against oxidative stress via its role in L-glutamate and L-cysteine transport. Negatively regulated by ARL6IP5. The chain is Excitatory amino acid transporter 3 from Homo sapiens (Human).